We begin with the raw amino-acid sequence, 552 residues long: Dihydroxy-acid dehydratase (552 aa).

Asp-78 is a Mg(2+) binding site. Cys-119 serves as a coordination point for [2Fe-2S] cluster. Mg(2+) contacts are provided by Asp-120 and Lys-121. Lys-121 carries the N6-carboxylysine modification. Cys-191 is a [2Fe-2S] cluster binding site. Glu-442 contacts Mg(2+). The active-site Proton acceptor is Ser-468.

This sequence belongs to the IlvD/Edd family. In terms of assembly, homodimer. [2Fe-2S] cluster is required as a cofactor. Mg(2+) serves as cofactor.

It carries out the reaction (2R)-2,3-dihydroxy-3-methylbutanoate = 3-methyl-2-oxobutanoate + H2O. It catalyses the reaction (2R,3R)-2,3-dihydroxy-3-methylpentanoate = (S)-3-methyl-2-oxopentanoate + H2O. Its pathway is amino-acid biosynthesis; L-isoleucine biosynthesis; L-isoleucine from 2-oxobutanoate: step 3/4. The protein operates within amino-acid biosynthesis; L-valine biosynthesis; L-valine from pyruvate: step 3/4. Its function is as follows. Functions in the biosynthesis of branched-chain amino acids. Catalyzes the dehydration of (2R,3R)-2,3-dihydroxy-3-methylpentanoate (2,3-dihydroxy-3-methylvalerate) into 2-oxo-3-methylpentanoate (2-oxo-3-methylvalerate) and of (2R)-2,3-dihydroxy-3-methylbutanoate (2,3-dihydroxyisovalerate) into 2-oxo-3-methylbutanoate (2-oxoisovalerate), the penultimate precursor to L-isoleucine and L-valine, respectively. This is Dihydroxy-acid dehydratase from Clostridium botulinum (strain Alaska E43 / Type E3).